The chain runs to 244 residues: Probable proteasome subunit alpha type-1 (244 aa).

It belongs to the peptidase T1A family. As to quaternary structure, the 26S proteasome consists of a 20S proteasome core and two 19S regulatory subunits. The 20S proteasome core is composed of 28 subunits that are arranged in four stacked rings, resulting in a barrel-shaped structure. The two end rings are each formed by seven alpha subunits, and the two central rings are each formed by seven beta subunits. The catalytic chamber with the active sites is on the inside of the barrel.

It is found in the cytoplasm. The protein resides in the nucleus. Its function is as follows. The proteasome is a multicatalytic proteinase complex which is characterized by its ability to cleave peptides with Arg, Phe, Tyr, Leu, and Glu adjacent to the leaving group at neutral or slightly basic pH. The proteasome has an ATP-dependent proteolytic activity. This chain is Probable proteasome subunit alpha type-1, found in Schizosaccharomyces pombe (strain 972 / ATCC 24843) (Fission yeast).